The following is a 379-amino-acid chain: Dual-specificity RNA methyltransferase RlmN (379 aa).

The active-site Proton acceptor is the Glu95. The Radical SAM core domain maps to 101-345 (EETRGTLCVS…TTVRKTRGDD (245 aa)). A disulfide bond links Cys108 and Cys350. Cys115, Cys119, and Cys122 together coordinate [4Fe-4S] cluster. S-adenosyl-L-methionine is bound by residues 176 to 177 (GE), Ser208, 230 to 232 (SLH), and Asn307. Residue Cys350 is the S-methylcysteine intermediate of the active site.

It belongs to the radical SAM superfamily. RlmN family. The cofactor is [4Fe-4S] cluster.

It localises to the cytoplasm. The catalysed reaction is adenosine(2503) in 23S rRNA + 2 reduced [2Fe-2S]-[ferredoxin] + 2 S-adenosyl-L-methionine = 2-methyladenosine(2503) in 23S rRNA + 5'-deoxyadenosine + L-methionine + 2 oxidized [2Fe-2S]-[ferredoxin] + S-adenosyl-L-homocysteine. The enzyme catalyses adenosine(37) in tRNA + 2 reduced [2Fe-2S]-[ferredoxin] + 2 S-adenosyl-L-methionine = 2-methyladenosine(37) in tRNA + 5'-deoxyadenosine + L-methionine + 2 oxidized [2Fe-2S]-[ferredoxin] + S-adenosyl-L-homocysteine. Functionally, specifically methylates position 2 of adenine 2503 in 23S rRNA and position 2 of adenine 37 in tRNAs. m2A2503 modification seems to play a crucial role in the proofreading step occurring at the peptidyl transferase center and thus would serve to optimize ribosomal fidelity. In Burkholderia vietnamiensis (strain G4 / LMG 22486) (Burkholderia cepacia (strain R1808)), this protein is Dual-specificity RNA methyltransferase RlmN.